A 59-amino-acid chain; its full sequence is Large ribosomal subunit protein uL30 (59 aa).

The protein belongs to the universal ribosomal protein uL30 family. As to quaternary structure, part of the 50S ribosomal subunit.

This Alkaliphilus metalliredigens (strain QYMF) protein is Large ribosomal subunit protein uL30.